Reading from the N-terminus, the 80-residue chain is MAVGISPGELRELTEEELTERLRESKEELFNLRFQMATGQLNNNRRLRTVRQEIARVYTVLRERELGLAAGPGEPDGKES.

This sequence belongs to the universal ribosomal protein uL29 family.

In Mycobacterium marinum (strain ATCC BAA-535 / M), this protein is Large ribosomal subunit protein uL29.